Reading from the N-terminus, the 72-residue chain is ATP synthase subunit c (72 aa).

The next 2 helical transmembrane spans lie at 5–25 (LLAAGIAVLAGIGAGIGIGIA) and 51–71 (AGLSEATAIYGLVVSIILLFV).

The protein belongs to the ATPase C chain family. F-type ATPases have 2 components, F(1) - the catalytic core - and F(0) - the membrane proton channel. F(1) has five subunits: alpha(3), beta(3), gamma(1), delta(1), epsilon(1). F(0) has three main subunits: a(1), b(2) and c(10-14). The alpha and beta chains form an alternating ring which encloses part of the gamma chain. F(1) is attached to F(0) by a central stalk formed by the gamma and epsilon chains, while a peripheral stalk is formed by the delta and b chains.

The protein localises to the cell membrane. Its function is as follows. F(1)F(0) ATP synthase produces ATP from ADP in the presence of a proton or sodium gradient. F-type ATPases consist of two structural domains, F(1) containing the extramembraneous catalytic core and F(0) containing the membrane proton channel, linked together by a central stalk and a peripheral stalk. During catalysis, ATP synthesis in the catalytic domain of F(1) is coupled via a rotary mechanism of the central stalk subunits to proton translocation. Key component of the F(0) channel; it plays a direct role in translocation across the membrane. A homomeric c-ring of between 10-14 subunits forms the central stalk rotor element with the F(1) delta and epsilon subunits. This chain is ATP synthase subunit c, found in Clostridium perfringens (strain ATCC 13124 / DSM 756 / JCM 1290 / NCIMB 6125 / NCTC 8237 / Type A).